We begin with the raw amino-acid sequence, 527 residues long: Peptide chain release factor 3 (527 aa).

The 270-residue stretch at 9 to 278 (NKRRTFAIIS…GLTQWAPKPQ (270 aa)) folds into the tr-type G domain. GTP contacts are provided by residues 18–25 (SHPDAGKT), 86–90 (DTPGH), and 140–143 (NKLD).

The protein belongs to the TRAFAC class translation factor GTPase superfamily. Classic translation factor GTPase family. PrfC subfamily.

It is found in the cytoplasm. Increases the formation of ribosomal termination complexes and stimulates activities of RF-1 and RF-2. It binds guanine nucleotides and has strong preference for UGA stop codons. It may interact directly with the ribosome. The stimulation of RF-1 and RF-2 is significantly reduced by GTP and GDP, but not by GMP. The protein is Peptide chain release factor 3 of Haemophilus influenzae (strain PittGG).